Reading from the N-terminus, the 431-residue chain is Enolase (431 aa).

Gln163 contacts (2R)-2-phosphoglycerate. Glu205 functions as the Proton donor in the catalytic mechanism. Mg(2+)-binding residues include Asp242, Glu288, and Asp315. Residues Lys340, Arg369, Ser370, and Lys391 each coordinate (2R)-2-phosphoglycerate. Lys340 serves as the catalytic Proton acceptor.

This sequence belongs to the enolase family. Mg(2+) serves as cofactor.

The protein resides in the cytoplasm. It localises to the secreted. It is found in the cell surface. It carries out the reaction (2R)-2-phosphoglycerate = phosphoenolpyruvate + H2O. The protein operates within carbohydrate degradation; glycolysis; pyruvate from D-glyceraldehyde 3-phosphate: step 4/5. In terms of biological role, catalyzes the reversible conversion of 2-phosphoglycerate (2-PG) into phosphoenolpyruvate (PEP). It is essential for the degradation of carbohydrates via glycolysis. This chain is Enolase, found in Trichlorobacter lovleyi (strain ATCC BAA-1151 / DSM 17278 / SZ) (Geobacter lovleyi).